The following is a 37-amino-acid chain: Large ribosomal subunit protein bL36 (37 aa).

The protein belongs to the bacterial ribosomal protein bL36 family.

The protein is Large ribosomal subunit protein bL36 of Listeria innocua serovar 6a (strain ATCC BAA-680 / CLIP 11262).